Reading from the N-terminus, the 484-residue chain is EF-hand calcium-binding domain-containing protein 14 (484 aa).

Disordered stretches follow at residues 1–48 (MKKR…TDEE), 227–255 (GSME…HSES), and 313–395 (EQRT…FTSD). A compositionally biased stretch (acidic residues) spans 37–48 (PDSDSESSTDEE). Composition is skewed to polar residues over residues 228-239 (SMENNGSNQILP), 315-324 (RTNVSSSTME), and 335-347 (LVTN…QAQS). EF-hand domains are found at residues 423-452 (SSIK…WNSL) and 453-484 (GSAM…ALGI). Ca(2+)-binding residues include aspartate 466, asparagine 468, aspartate 470, arginine 472, and glutamate 477.

This Mus musculus (Mouse) protein is EF-hand calcium-binding domain-containing protein 14 (Efcab14).